The primary structure comprises 272 residues: SPbeta prophage-derived aminoglycoside N(3')-acetyltransferase-like protein YokD (272 aa).

CoA is bound by residues 38-44 (LSSIGWV) and glutamine 113.

This sequence belongs to the antibiotic N-acetyltransferase family. As to quaternary structure, homodimer.

In terms of biological role, may contribute to antibiotic resistance. The polypeptide is SPbeta prophage-derived aminoglycoside N(3')-acetyltransferase-like protein YokD (yokD) (Bacillus subtilis (strain 168)).